The primary structure comprises 252 residues: Ribosomal RNA small subunit methyltransferase J (252 aa).

S-adenosyl-L-methionine contacts are provided by residues arginine 101–aspartate 102, glutamate 117–arginine 118, serine 153–serine 154, and aspartate 171.

The protein belongs to the methyltransferase superfamily. RsmJ family.

It localises to the cytoplasm. It carries out the reaction guanosine(1516) in 16S rRNA + S-adenosyl-L-methionine = N(2)-methylguanosine(1516) in 16S rRNA + S-adenosyl-L-homocysteine + H(+). Functionally, specifically methylates the guanosine in position 1516 of 16S rRNA. This chain is Ribosomal RNA small subunit methyltransferase J, found in Salmonella heidelberg (strain SL476).